A 1050-amino-acid chain; its full sequence is Ankyrin repeat domain-containing protein 27 (1050 aa).

Residues 1-372 (MALYDEDLLK…RQGSLSAKPP (372 aa)) form a sufficient for GEF activity towards RAB21 region. A VPS9 domain is found at 233 to 371 (ASEDAAFNKI…IRQGSLSAKP (139 aa)). 6 ANK repeats span residues 396-426 (SPTD…DKDA), 462-491 (RGHT…VVNA), 495-524 (HGAT…SAEV), 528-560 (NGNT…RLDI), 564-593 (KGDT…SPEI), and 597-627 (LKET…RQKS). The sufficient for interaction with VPS29 stretch occupies residues 396–460 (SPTDCLFKHI…PSVVTPFSRD (65 aa)). The tract at residues 451 to 600 (PSVVTPFSRD…PEIQNRLKET (150 aa)) is interaction with RAB38. Positions 451 to 730 (PSVVTPFSRD…APAQKRLAKV (280 aa)) are interaction with RAB32. Residues 630-665 (APVQSLQRSVDSISQESSTSSFSSMSAGSRQEETKK) are disordered. Residues 638 to 658 (SVDSISQESSTSSFSSMSAGS) are compositionally biased toward low complexity. The segment at 658–707 (SRQEETKKDYREVEKLLRAVADGDLEMVRYLLEWTEEDLEDAEDTVSAVD) is required for interaction with VAMP7. ANK repeat units follow at residues 668-698 (REVE…DLED), 743-772 (DGSS…NAGA), 776-805 (DQAV…KPNK), 809-838 (SGNT…AINT), and 842-871 (KGNT…SVQV). Positions 692-746 (TEEDLEDAEDTVSAVDPEFCHPLCQCPKCAPAQKRLAKVPASGLGVNVTSQDGSS) are sufficient for interaction with VPS29. Residues Ser962 and Ser970 each carry the phosphoserine modification. The disordered stretch occupies residues 987 to 1050 (PAQSGSHAAE…TPQEVSASRS (64 aa)). Basic and acidic residues predominate over residues 994–1007 (AAEKGNSDWPERPR). Thr1023 carries the post-translational modification Phosphothreonine. Over residues 1040 to 1050 (STPQEVSASRS) the composition is skewed to polar residues.

As to quaternary structure, interacts with RAB21 (GDP-bound form), VPS29, KIF5A, KIF5C, GOLGA4. Interacts with RAB32 (GTP-bound form), RAB38 (GTP-bound form), VAMP7. Interacts with low affinity with RAB5. ANKRD27:RAB32 heterodimers can homodimerize to form tetramers. Can interact with RAB38 or RAB32, VPS29 and VAMP7 simultaneously. A decreased interaction with RAB32 seen in the presence of SGSM2.

It is found in the early endosome. It localises to the late endosome. Its subcellular location is the cytoplasmic vesicle membrane. The protein resides in the lysosome. The protein localises to the cell membrane. It is found in the melanosome. Its function is as follows. May be a guanine exchange factor (GEF) for Rab21, Rab32 and Rab38 and regulate endosome dynamics. May regulate the participation of VAMP7 in membrane fusion events; in vitro inhibits VAMP7-mediated SNARE complex formation by trapping VAMP7 in a closed, fusogenically inactive conformation. Involved in peripheral melanosomal distribution of TYRP1 in melanocytes; the function, which probably is implicating vesicle-trafficking, includes cooperation with Rab32, Rab38 and VAMP7. Involved in the regulation of neurite growth; the function seems to require its GEF activity, probably towards Rab21, and VAMP7 but not Rab32/38. Proposed to be involved in Golgi sorting of VAMP7 and transport of VAMP7 vesicles to the cell surface; the function seems to implicate kinesin heavy chain isoform 5 proteins, GOLGA4, RAB21 and MACF1. Required for the colocalization of VAMP7 and Rab21, probably on TGN sites. Involved in GLUT1 endosome-to-plasma membrane trafficking; the function is dependent of association with VPS29. Regulates the proper trafficking of melanogenic enzymes TYR, TYRP1 and DCT/TYRP2 to melanosomes in melanocytes. The protein is Ankyrin repeat domain-containing protein 27 (ANKRD27) of Pongo abelii (Sumatran orangutan).